We begin with the raw amino-acid sequence, 86 residues long: Mitochondrial import inner membrane translocase subunit Tim10 (86 aa).

Residues 29-54 carry the Twin CX3C motif motif; the sequence is CQAKCIATAFRESELTKGEAVCLDRC. Intrachain disulfides connect Cys29–Cys54 and Cys33–Cys50.

The protein belongs to the small Tim family. Heterohexamer; composed of 3 copies of tim-9/tin-9.1 and 3 copies of tim-10/tin-10, named soluble 70 kDa complex. The complex associates with the tim-22 component of the TIM22 complex. Interacts with multi-pass transmembrane proteins in transit.

The protein localises to the mitochondrion inner membrane. Functionally, mitochondrial intermembrane chaperone that participates in the import and insertion of multi-pass transmembrane proteins into the mitochondrial inner membrane. May also be required for the transfer of beta-barrel precursors from the TOM complex to the sorting and assembly machinery (SAM complex) of the outer membrane. Acts as a chaperone-like protein that protects the hydrophobic precursors from aggregation and guide them through the mitochondrial intermembrane space. This is Mitochondrial import inner membrane translocase subunit Tim10 (tin-10) from Caenorhabditis elegans.